The following is a 384-amino-acid chain: Beta-lactamase (384 aa).

An N-terminal signal peptide occupies residues 1–29 (MDNSMKNIFRQGRLFIALSLAMTSISAFA). Ser87 (acyl-ester intermediate) is an active-site residue. Tyr172 acts as the Proton acceptor in catalysis. 337-339 (KTG) is a substrate binding site.

Belongs to the class-C beta-lactamase family.

It is found in the periplasm. It catalyses the reaction a beta-lactam + H2O = a substituted beta-amino acid. Functionally, this protein is a serine beta-lactamase with a substrate specificity for cephalosporins. This chain is Beta-lactamase (ampC), found in Providencia stuartii.